A 276-amino-acid polypeptide reads, in one-letter code: Malonyl-[acyl-carrier protein] O-methyltransferase (276 aa).

This sequence belongs to the methyltransferase superfamily.

It catalyses the reaction malonyl-[ACP] + S-adenosyl-L-methionine = malonyl-[ACP] methyl ester + S-adenosyl-L-homocysteine. Its pathway is cofactor biosynthesis; biotin biosynthesis. Its function is as follows. Converts the free carboxyl group of a malonyl-thioester to its methyl ester by transfer of a methyl group from S-adenosyl-L-methionine (SAM). It allows to synthesize pimeloyl-ACP via the fatty acid synthetic pathway. The protein is Malonyl-[acyl-carrier protein] O-methyltransferase of Paenibacillus sp. (strain JDR-2).